Reading from the N-terminus, the 522-residue chain is U4/U6 small nuclear ribonucleoprotein Prp4 (522 aa).

A compositionally biased stretch (polar residues) spans 1-13; it reads MASSRASSTQATK. The segment at 1 to 20 is disordered; it reads MASSRASSTQATKTKAPDDL. Lysine 27 is modified (N6-acetyllysine). 7 WD repeats span residues 229 to 268, 271 to 318, 321 to 360, 363 to 402, 405 to 444, 447 to 487, and 490 to 521; these read GDDR…LLHT, GHNT…PVAD, GHTV…EILH, GHSM…CIMF, GHLK…CVYT, AHQN…PLKT, and GHEG…LWMA.

As to quaternary structure, component of the precatalytic spliceosome (spliceosome B complex). Component of the U4/U6-U5 tri-snRNP complex, a building block of the precatalytic spliceosome (spliceosome B complex). The U4/U6-U5 tri-snRNP complex is composed of the U4, U6 and U5 snRNAs and at least PRPF3, PRPF4, PRPF6, PRPF8, PRPF31, SNRNP200, TXNL4A, SNRNP40, SNRPB, SNRPD1, SNRPD2, SNRPD3, SNRPE, SNRPF, SNRPG, DDX23, CD2BP2, PPIH, SNU13, EFTUD2, SART1 and USP39, plus LSM2, LSM3, LSM4, LSM5, LSM6, LSM7 and LSM8. Interacts directly with PRPF18, PPIH and PRPF3. Part of a heteromeric complex containing PPIH, PRPF3 and PRPF4 that is stable in the absence of RNA. Interacts with ERCC6.

It localises to the nucleus. The protein resides in the nucleus speckle. Functionally, plays a role in pre-mRNA splicing as component of the U4/U6-U5 tri-snRNP complex that is involved in spliceosome assembly, and as component of the precatalytic spliceosome (spliceosome B complex). The sequence is that of U4/U6 small nuclear ribonucleoprotein Prp4 (PRPF4) from Homo sapiens (Human).